Here is a 712-residue protein sequence, read N- to C-terminus: U11/U12 small nuclear ribonucleoprotein 48 kDa protein (712 aa).

The segment at 98–125 adopts a CHHC U11-48K-type zinc-finger fold; it reads FVRCPFDSNHFMPPEALFLHSLRCPNTL. Zn(2+)-binding residues include Cys-101, His-107, His-117, and Cys-121. The segment at 562–712 is disordered; it reads QSRSPIGNDQ…EDRYIPTEKE (151 aa). Basic and acidic residues-rich tracts occupy residues 585–595, 603–614, 629–663, 672–693, and 702–712; these read KQWKGENRADI, QNSDKVKRHDEY, KHSDRRDDKLRDRRKDKHNDRRDDEFTRTKRHSIE, SSREKSSSDYKTKRDDPYDRRS, and FEDRYIPTEKE.

As to quaternary structure, component of the U11/U12 snRNPs that are part of the U12-type spliceosome. Not found in the major spliceosome.

The protein resides in the nucleus. Functionally, likely involved in U12-type 5' splice site recognition. In Arabidopsis thaliana (Mouse-ear cress), this protein is U11/U12 small nuclear ribonucleoprotein 48 kDa protein (SNRNP48).